Consider the following 147-residue polypeptide: Ribosome maturation factor RimP (147 aa).

The protein belongs to the RimP family.

Its subcellular location is the cytoplasm. Its function is as follows. Required for maturation of 30S ribosomal subunits. The polypeptide is Ribosome maturation factor RimP (Sulfurihydrogenibium sp. (strain YO3AOP1)).